A 208-amino-acid chain; its full sequence is Ion-translocating oxidoreductase complex subunit G (208 aa).

A helical transmembrane segment spans residues 9 to 29 (GVTLAVFAALTTGLTAMVNAL). Thr-174 carries the post-translational modification FMN phosphoryl threonine.

Belongs to the RnfG family. In terms of assembly, the complex is composed of six subunits: RnfA, RnfB, RnfC, RnfD, RnfE and RnfG. FMN is required as a cofactor.

The protein localises to the cell inner membrane. In terms of biological role, part of a membrane-bound complex that couples electron transfer with translocation of ions across the membrane. In Cronobacter sakazakii (strain ATCC BAA-894) (Enterobacter sakazakii), this protein is Ion-translocating oxidoreductase complex subunit G.